We begin with the raw amino-acid sequence, 118 residues long: Large ribosomal subunit protein bL19 (118 aa).

The protein belongs to the bacterial ribosomal protein bL19 family.

This protein is located at the 30S-50S ribosomal subunit interface and may play a role in the structure and function of the aminoacyl-tRNA binding site. The polypeptide is Large ribosomal subunit protein bL19 (Geotalea uraniireducens (strain Rf4) (Geobacter uraniireducens)).